The sequence spans 237 residues: Phosphoribosylaminoimidazole-succinocarboxamide synthase (237 aa).

The protein belongs to the SAICAR synthetase family.

The enzyme catalyses 5-amino-1-(5-phospho-D-ribosyl)imidazole-4-carboxylate + L-aspartate + ATP = (2S)-2-[5-amino-1-(5-phospho-beta-D-ribosyl)imidazole-4-carboxamido]succinate + ADP + phosphate + 2 H(+). The protein operates within purine metabolism; IMP biosynthesis via de novo pathway; 5-amino-1-(5-phospho-D-ribosyl)imidazole-4-carboxamide from 5-amino-1-(5-phospho-D-ribosyl)imidazole-4-carboxylate: step 1/2. The polypeptide is Phosphoribosylaminoimidazole-succinocarboxamide synthase (Baumannia cicadellinicola subsp. Homalodisca coagulata).